Consider the following 239-residue polypeptide: Xyloglucan-specific endo-beta-1,4-glucanase A (239 aa).

A signal peptide spans 1–14; it reads MKLLALSLASLASA. A glycan (N-linked (GlcNAc...) asparagine) is linked at asparagine 172.

Belongs to the glycosyl hydrolase 12 (cellulase H) family.

It is found in the secreted. The catalysed reaction is xyloglucan + H2O = xyloglucan oligosaccharides.. Functionally, catalyzes endohydrolysis of 1,4-beta-D-glucosidic linkages in xyloglucan with retention of the beta-configuration of the glycosyl residues. Specific for xyloglucan and does not hydrolyze other cell wall components. Active against tamarind xyloglucan. The protein is Xyloglucan-specific endo-beta-1,4-glucanase A (xgeA) of Emericella nidulans (strain FGSC A4 / ATCC 38163 / CBS 112.46 / NRRL 194 / M139) (Aspergillus nidulans).